A 987-amino-acid polypeptide reads, in one-letter code: 110 kDa U5 small nuclear ribonucleoprotein component CLO (987 aa).

A disordered region spans residues 1–54 (MESSLYDEFGNYVGPEIESDRDSDDEVEDEDLQDKHLEENGSDGEQGPGGSNGW). A compositionally biased stretch (acidic residues) spans 17 to 32 (IESDRDSDDEVEDEDL). Positions 136–422 (ALVRNVALVG…LGVTLSNSAY (287 aa)) constitute a tr-type G domain. The interval 145 to 152 (GHLQHGKT) is G1. 145–152 (GHLQHGKT) serves as a coordination point for GTP. The tract at residues 189-193 (NISIK) is G2. Residues 215–218 (DTPG) are G3. GTP-binding positions include 215–219 (DTPGH) and 269–272 (NKVD). The interval 269–272 (NKVD) is G4. A G5 region spans residues 395–397 (YSQ).

It belongs to the TRAFAC class translation factor GTPase superfamily. Classic translation factor GTPase family. As to quaternary structure, interacts with BRR2A and PRP8A. As to expression, expressed in flower buds, open flowers and siliques. Expressed at low levels in rosettes leaves, cauline leaves and stems.

The protein localises to the nucleus speckle. Its function is as follows. Splicing factor involved in pre-mRNA splicing and component of the spliceosome. Essential for reproduction. In female gametophyte, is necessary for the egg cell and central cell fate determination and hence reproductive success. Involved in a mechanism that prevents accessory cells from adopting gametic cell fate. Is necessary to restrict LIS expression to interfere with egg-cell specification. Probable component of U5 small nuclear ribonucleoprotein (snRNP) that is required for pre-mRNA splicing. Plays an essential role in female gametogenesis and embryo development. Required for the control of polarized cell growth and cell proliferation during floral organ morphogenesis. This chain is 110 kDa U5 small nuclear ribonucleoprotein component CLO, found in Arabidopsis thaliana (Mouse-ear cress).